The primary structure comprises 89 residues: Small ribosomal subunit protein uS15 (89 aa).

It belongs to the universal ribosomal protein uS15 family. Part of the 30S ribosomal subunit. Forms a bridge to the 50S subunit in the 70S ribosome, contacting the 23S rRNA.

Functionally, one of the primary rRNA binding proteins, it binds directly to 16S rRNA where it helps nucleate assembly of the platform of the 30S subunit by binding and bridging several RNA helices of the 16S rRNA. In terms of biological role, forms an intersubunit bridge (bridge B4) with the 23S rRNA of the 50S subunit in the ribosome. This is Small ribosomal subunit protein uS15 from Yersinia enterocolitica serotype O:8 / biotype 1B (strain NCTC 13174 / 8081).